Here is a 316-residue protein sequence, read N- to C-terminus: 4-hydroxy-3-methylbut-2-enyl diphosphate reductase (316 aa).

A [4Fe-4S] cluster-binding site is contributed by Cys12. Positions 41 and 74 each coordinate (2E)-4-hydroxy-3-methylbut-2-enyl diphosphate. Dimethylallyl diphosphate-binding residues include His41 and His74. Residues His41 and His74 each contribute to the isopentenyl diphosphate site. Cys96 is a [4Fe-4S] cluster binding site. His124 contacts (2E)-4-hydroxy-3-methylbut-2-enyl diphosphate. His124 is a dimethylallyl diphosphate binding site. His124 is an isopentenyl diphosphate binding site. Glu126 acts as the Proton donor in catalysis. Thr167 contributes to the (2E)-4-hydroxy-3-methylbut-2-enyl diphosphate binding site. Residue Cys197 participates in [4Fe-4S] cluster binding. Residues Ser225, Ser226, Asn227, and Ser269 each contribute to the (2E)-4-hydroxy-3-methylbut-2-enyl diphosphate site. Ser225, Ser226, Asn227, and Ser269 together coordinate dimethylallyl diphosphate. Positions 225, 226, 227, and 269 each coordinate isopentenyl diphosphate.

This sequence belongs to the IspH family. Homodimer. [4Fe-4S] cluster is required as a cofactor.

It catalyses the reaction isopentenyl diphosphate + 2 oxidized [2Fe-2S]-[ferredoxin] + H2O = (2E)-4-hydroxy-3-methylbut-2-enyl diphosphate + 2 reduced [2Fe-2S]-[ferredoxin] + 2 H(+). The enzyme catalyses dimethylallyl diphosphate + 2 oxidized [2Fe-2S]-[ferredoxin] + H2O = (2E)-4-hydroxy-3-methylbut-2-enyl diphosphate + 2 reduced [2Fe-2S]-[ferredoxin] + 2 H(+). It participates in isoprenoid biosynthesis; dimethylallyl diphosphate biosynthesis; dimethylallyl diphosphate from (2E)-4-hydroxy-3-methylbutenyl diphosphate: step 1/1. It functions in the pathway isoprenoid biosynthesis; isopentenyl diphosphate biosynthesis via DXP pathway; isopentenyl diphosphate from 1-deoxy-D-xylulose 5-phosphate: step 6/6. Catalyzes the conversion of 1-hydroxy-2-methyl-2-(E)-butenyl 4-diphosphate (HMBPP) into a mixture of isopentenyl diphosphate (IPP) and dimethylallyl diphosphate (DMAPP). Acts in the terminal step of the DOXP/MEP pathway for isoprenoid precursor biosynthesis. In Klebsiella pneumoniae (strain 342), this protein is 4-hydroxy-3-methylbut-2-enyl diphosphate reductase.